The chain runs to 344 residues: Inositol 2-dehydrogenase/D-chiro-inositol 3-dehydrogenase (344 aa).

This sequence belongs to the Gfo/Idh/MocA family. As to quaternary structure, homotetramer.

It catalyses the reaction myo-inositol + NAD(+) = scyllo-inosose + NADH + H(+). The catalysed reaction is 1D-chiro-inositol + NAD(+) = scyllo-inosine + NADH + H(+). It participates in polyol metabolism; myo-inositol degradation into acetyl-CoA; acetyl-CoA from myo-inositol: step 1/7. Its function is as follows. Involved in the oxidation of myo-inositol (MI) and D-chiro-inositol (DCI) to 2-keto-myo-inositol (2KMI or 2-inosose) and 1-keto-D-chiro-inositol (1KDCI), respectively. The protein is Inositol 2-dehydrogenase/D-chiro-inositol 3-dehydrogenase of Bacillus licheniformis (strain ATCC 14580 / DSM 13 / JCM 2505 / CCUG 7422 / NBRC 12200 / NCIMB 9375 / NCTC 10341 / NRRL NRS-1264 / Gibson 46).